We begin with the raw amino-acid sequence, 291 residues long: Small ribosomal subunit protein uS2 (291 aa).

The disordered stretch occupies residues 254-291; it reads RTSNRDNKNNKNNNNTDNTDNAASIKEEDLIGGSNNEN. Residues 263-277 show a composition bias toward low complexity; sequence NKNNNNTDNTDNAAS.

This sequence belongs to the universal ribosomal protein uS2 family.

The protein is Small ribosomal subunit protein uS2 of Ehrlichia canis (strain Jake).